The following is a 313-amino-acid chain: Interferon-inducible double-stranded RNA-dependent protein kinase activator A (313 aa).

The disordered stretch occupies residues 1–21 (MSQSRHRAAAPPMEREDSGTF). Sufficient for self-association and interaction with TARBP2 regions lie at residues 1–103 (MSQS…KANA), 102–195 (NASI…FSNI), and 195–313 (ISPE…AERK). Phosphoserine is present on S18. DRBM domains follow at residues 34-101 (TPIQ…ILKA), 126-194 (NPIG…KFSN), and 240-308 (DYIQ…YLKI). A phosphoserine mark is found at S167, S246, and S287.

This sequence belongs to the PRKRA family. In terms of assembly, homodimer. Interacts with EIF2AK2/PKR through its DRBM domains. Interacts with DICER1, AGO2 and TARBP2. Also able to interact with dsRNA. Interacts with UBC9. Forms a complex with UBC9 and p53/TP53. Interacts with DUS2L (via DRBM domain). Phosphorylated at Ser-246 in unstressed cells and at Ser-287 in stressed cells. Phosphorylation at Ser-246 appears to be a prerequisite for subsequent phosphorylation at Ser-287. Phosphorylation at Ser-246 and Ser-287 are necessary for activation of EIF2AK2/PKR under conditions of stress.

The protein localises to the cytoplasm. It localises to the perinuclear region. Activates EIF2AK2/PKR in the absence of double-stranded RNA (dsRNA), leading to phosphorylation of EIF2S1/EFI2-alpha and inhibition of translation and induction of apoptosis. Required for siRNA production by DICER1 and for subsequent siRNA-mediated post-transcriptional gene silencing. Does not seem to be required for processing of pre-miRNA to miRNA by DICER1. Promotes UBC9-p53/TP53 association and sumoylation and phosphorylation of p53/TP53 at 'Lys-386' at 'Ser-392' respectively and enhances its activity in a EIF2AK2/PKR-dependent manner. The protein is Interferon-inducible double-stranded RNA-dependent protein kinase activator A (PRKRA) of Bos taurus (Bovine).